The following is an 87-amino-acid chain: U3-theraphotoxin-Hhn1m (87 aa).

The first 24 residues, 1–24, serve as a signal peptide directing secretion; sequence MVNMKASMFLTFAGLVLLFVVCYA. Positions 25–52 are excised as a propeptide; it reads SESEEKEFPKEMLSSIFAVDNDFKQEER. Intrachain disulfides connect Cys54–Cys67, Cys61–Cys72, and Cys66–Cys79.

Belongs to the neurotoxin 10 (Hwtx-1) family. 51 (Hntx-8) subfamily. Hntx-8 sub-subfamily. In terms of tissue distribution, expressed by the venom gland.

Its subcellular location is the secreted. Functionally, ion channel inhibitor. The polypeptide is U3-theraphotoxin-Hhn1m (Cyriopagopus hainanus (Chinese bird spider)).